The primary structure comprises 113 residues: Large ribosomal subunit protein P1 (113 aa).

The tract at residues 84–113 is disordered; the sequence is APAAAAKKETKKEEVKKEESDDDMGMGLFD. Basic and acidic residues predominate over residues 89–102; the sequence is AKKETKKEEVKKEE.

The protein belongs to the eukaryotic ribosomal protein P1/P2 family. In terms of assembly, P1 and P2 exist as dimers at the large ribosomal subunit.

In terms of biological role, plays an important role in the elongation step of protein synthesis. This chain is Large ribosomal subunit protein P1 (rplp1), found in Dictyostelium discoideum (Social amoeba).